We begin with the raw amino-acid sequence, 191 residues long: LHFPL tetraspan subfamily member 7 protein (191 aa).

A run of 4 helical transmembrane segments spans residues 6-26 (MGSL…FSLM), 72-92 (IAAV…VLVL), 112-132 (YAQI…PFNL), and 154-174 (LGWG…LPFI).

This sequence belongs to the TMEM211 family.

It is found in the membrane. This chain is LHFPL tetraspan subfamily member 7 protein (lhfpl7), found in Xenopus tropicalis (Western clawed frog).